The primary structure comprises 196 residues: T-cell surface glycoprotein CD3 epsilon chain (196 aa).

A signal peptide spans 1–21; that stretch reads MPSGNLWKVLGLCLLSVGAWG. The Extracellular segment spans residues 22-116; that stretch reads QEDIERPDED…VCENCVEVDL (95 aa). The Ig-like domain maps to 28 to 102; that stretch reads PDEDTQKTFK…VGEKTSHRLY (75 aa). A disulfide bridge connects residues Cys-49 and Cys-91. A helical transmembrane segment spans residues 117 to 137; sequence MAVVTIIVVDICITLGLLMVV. Topologically, residues 138–196 are cytoplasmic; that stretch reads YYYSKSRKAKAMPVTRGAGAGGRPRGQNRERPPPVPNPDYEPIRKGQRDLYSGLNQRGR. The disordered stretch occupies residues 150 to 196; it reads PVTRGAGAGGRPRGQNRERPPPVPNPDYEPIRKGQRDLYSGLNQRGR. Residues 164–181 form an NUMB-binding region region; sequence QNRERPPPVPNPDYEPIR. The ITAM domain maps to 167–194; that stretch reads ERPPPVPNPDYEPIRKGQRDLYSGLNQR. A proline-rich sequence region spans residues 168-175; it reads RPPPVPNP. Phosphotyrosine occurs at positions 177 and 188.

In terms of assembly, the TCR-CD3 complex is composed of a CD3D/CD3E and a CD3G/CD3E heterodimers that preferentially associate with TCRalpha and TCRbeta, respectively, to form TCRalpha/CD3E/CD3G and TCRbeta/CD3G/CD3E trimers. In turn, the hexamer interacts with CD3Z homodimer to form the TCR-CD3 complex. Alternatively, TCRalpha and TCRbeta can be replaced by TCRgamma and TCRdelta. Interacts with CD6. Interacts (via Proline-rich sequence) with NCK1; the interaction is ligand dependent but independent of tyrosine kinase activation. Post-translationally, phosphorylated on Tyr residues after T-cell receptor triggering by LCK in association with CD4/CD8.

The protein localises to the cell membrane. Functionally, part of the TCR-CD3 complex present on T-lymphocyte cell surface that plays an essential role in adaptive immune response. When antigen presenting cells (APCs) activate T-cell receptor (TCR), TCR-mediated signals are transmitted across the cell membrane by the CD3 chains CD3D, CD3E, CD3G and CD3Z. All CD3 chains contain immunoreceptor tyrosine-based activation motifs (ITAMs) in their cytoplasmic domain. Upon TCR engagement, these motifs become phosphorylated by Src family protein tyrosine kinases LCK and FYN, resulting in the activation of downstream signaling pathways. In addition of this role of signal transduction in T-cell activation, CD3E plays an essential role in correct T-cell development. Also participates in internalization and cell surface down-regulation of TCR-CD3 complexes via endocytosis sequences present in CD3E cytosolic region. In addition to its role as a TCR coreceptor, it serves as a receptor for ITPRIPL1. Ligand recognition inhibits T-cell activation by promoting interaction with NCK1, which prevents CD3E-ZAP70 interaction and blocks the ERK-NFkB signaling cascade and calcium influx. The chain is T-cell surface glycoprotein CD3 epsilon chain (CD3E) from Sus scrofa (Pig).